Reading from the N-terminus, the 37-residue chain is NADH dehydrogenase [ubiquinone] 1 alpha subcomplex subunit 5 (37 aa).

The protein belongs to the complex I NDUFA5 subunit family. As to quaternary structure, complex I is composed of about 45 different subunits.

It localises to the mitochondrion inner membrane. Functionally, accessory subunit of the mitochondrial membrane respiratory chain NADH dehydrogenase (Complex I), that is believed not to be involved in catalysis. Complex I functions in the transfer of electrons from NADH to the respiratory chain. The immediate electron acceptor for the enzyme is believed to be ubiquinone. The chain is NADH dehydrogenase [ubiquinone] 1 alpha subcomplex subunit 5 from Solanum tuberosum (Potato).